Reading from the N-terminus, the 723-residue chain is Tryptophan 2-monooxygenase (723 aa).

FMN-binding residues include Ser218, Glu238, Arg246, and Arg266. Arg266 provides a ligand contact to substrate.

This sequence belongs to the tryptophan 2-monooxygenase family. FMN is required as a cofactor.

The enzyme catalyses L-tryptophan + O2 = indole-3-acetamide + CO2 + H2O. It functions in the pathway plant hormone metabolism; auxin biosynthesis. The sequence is that of Tryptophan 2-monooxygenase (iaaM) from Allorhizobium ampelinum (strain ATCC BAA-846 / DSM 112012 / S4) (Agrobacterium vitis (strain S4)).